Here is an 80-residue protein sequence, read N- to C-terminus: Cell division protein ZapB (80 aa).

The stretch at 3–80 (FEVLEKLEAK…ALLGKMEDVE (78 aa)) forms a coiled coil.

Belongs to the ZapB family. In terms of assembly, homodimer. The ends of the coiled-coil dimer bind to each other, forming polymers. Interacts with FtsZ.

It is found in the cytoplasm. Its function is as follows. Non-essential, abundant cell division factor that is required for proper Z-ring formation. It is recruited early to the divisome by direct interaction with FtsZ, stimulating Z-ring assembly and thereby promoting cell division earlier in the cell cycle. Its recruitment to the Z-ring requires functional FtsA or ZipA. The chain is Cell division protein ZapB from Vibrio vulnificus (strain CMCP6).